A 215-amino-acid chain; its full sequence is Ion-translocating oxidoreductase complex subunit G (215 aa).

A helical transmembrane segment spans residues 9–29; the sequence is GLLLSGFALICTAAVALVNEA. Thr176 is subject to FMN phosphoryl threonine.

This sequence belongs to the RnfG family. The complex is composed of six subunits: RnfA, RnfB, RnfC, RnfD, RnfE and RnfG. It depends on FMN as a cofactor.

It is found in the cell inner membrane. Its function is as follows. Part of a membrane-bound complex that couples electron transfer with translocation of ions across the membrane. The chain is Ion-translocating oxidoreductase complex subunit G from Shewanella amazonensis (strain ATCC BAA-1098 / SB2B).